A 268-amino-acid chain; its full sequence is MEPLVIAGKSYSSRLLLGTGKYRDFAETRAAVDASGAQIITVAIRRTNIGQNPDEPNLLDILPPSQFTLLPNTAGCYTAEDAVRTLRLARELLDGHALVKLEVLGDQKTLFPDVVATIEAAKILVKEGFQVMVYTSDDPIVARQLEDIGCAAIMPLASLIGSGMGILNPWNLQIIIDKATVPVIVDAGVGTASDAAIAMELGCDGVLMNTAVASARNPILMASAMRKAVEAGREAYLAGRMPRKIYQASPSSPAEGMFTGTQHPAANS.

The active-site Schiff-base intermediate with DXP is the Lys100. Residues Gly161, 187–188 (AG), and 209–210 (NT) contribute to the 1-deoxy-D-xylulose 5-phosphate site. The segment at 248 to 268 (ASPSSPAEGMFTGTQHPAANS) is disordered. Polar residues predominate over residues 259–268 (TGTQHPAANS).

This sequence belongs to the ThiG family. In terms of assembly, homotetramer. Forms heterodimers with either ThiH or ThiS.

Its subcellular location is the cytoplasm. It carries out the reaction [ThiS sulfur-carrier protein]-C-terminal-Gly-aminoethanethioate + 2-iminoacetate + 1-deoxy-D-xylulose 5-phosphate = [ThiS sulfur-carrier protein]-C-terminal Gly-Gly + 2-[(2R,5Z)-2-carboxy-4-methylthiazol-5(2H)-ylidene]ethyl phosphate + 2 H2O + H(+). Its pathway is cofactor biosynthesis; thiamine diphosphate biosynthesis. In terms of biological role, catalyzes the rearrangement of 1-deoxy-D-xylulose 5-phosphate (DXP) to produce the thiazole phosphate moiety of thiamine. Sulfur is provided by the thiocarboxylate moiety of the carrier protein ThiS. In vitro, sulfur can be provided by H(2)S. In Nitrosomonas europaea (strain ATCC 19718 / CIP 103999 / KCTC 2705 / NBRC 14298), this protein is Thiazole synthase.